We begin with the raw amino-acid sequence, 152 residues long: Large ribosomal subunit protein uL15 (152 aa).

The disordered stretch occupies residues 1–56; that stretch reads MTSTLNTLKSNLGSRKKKLRKGRGIAAGQGASCGFGMRGQKSRSGRPTRPGFEGGQ. The segment covering 14–23 has biased composition (basic residues); that stretch reads SRKKKLRKGR. Residues 25–37 are compositionally biased toward gly residues; that stretch reads IAAGQGASCGFGM.

Belongs to the universal ribosomal protein uL15 family. Part of the 50S ribosomal subunit.

Its function is as follows. Binds to the 23S rRNA. This is Large ribosomal subunit protein uL15 from Prochlorococcus marinus (strain MIT 9515).